Reading from the N-terminus, the 508-residue chain is UBX domain-containing protein 4 (508 aa).

The interaction with UBQLN1 stretch occupies residues 1 to 200 (MLWFQGAIPA…PTEDLTVRVE (200 aa)). Over 1-413 (MLWFQGAIPA…VHSSSGDFWT (413 aa)) the chain is Cytoplasmic. The disordered stretch occupies residues 117-199 (GEASLANGSQ…RPTEDLTVRV (83 aa)). Residues 122–190 (ANGSQSEGSV…QEPSGCSNQR (69 aa)) show a composition bias toward polar residues. Positions 315–393 (ERSTVARIQF…ELAPSASVVL (79 aa)) constitute a UBX domain. Residues 414-434 (LLGTVLYPFLAIWRLISNFLF) lie within the membrane without spanning it. At 435 to 508 (SNPPPAQTSV…TWNGNSTQQM (74 aa)) the chain is on the cytoplasmic side. Positions 450-459 (ETSNLASSSN) are enriched in polar residues. Residues 450 to 508 (ETSNLASSSNSEKREPVRKRVLEKRGEDFKKEGKIYRLRTQDDGEDENNTWNGNSTQQM) are disordered. Over residues 460–491 (SEKREPVRKRVLEKRGEDFKKEGKIYRLRTQD) the composition is skewed to basic and acidic residues. Position 489 is a phosphothreonine (T489). A compositionally biased stretch (polar residues) spans 498 to 508 (NTWNGNSTQQM).

As to quaternary structure, directly interacts with VCP. Interacts with UBQLN1. Forms a complex with VCP and UBQLN1.

The protein resides in the endoplasmic reticulum membrane. It localises to the nucleus envelope. Involved in endoplasmic reticulum-associated protein degradation (ERAD). Acts as a platform to recruit both UBQLN1 and VCP to the ER during ERAD. The polypeptide is UBX domain-containing protein 4 (UBXN4) (Bos taurus (Bovine)).